The chain runs to 268 residues: MTLLNVSDLSHHYAHGGFSGKHQHQAVLNNVSLTLKSGETVALLGRSGCGKSTLARLLIGLESPSQGNISWRGEPLAKLNRAQRKAFRRDIQMVFQDSISAVNPRKTVREILREPMRHLLSLKKSEQLARASEMLKAVDLDDSVLDKRPPQLSGGQLQRVCLARALAVEPKLLILDEAVSNLDLVLQAGVIRLLKKLQQQFGTACLFITHDLRLVERFCQRVMVMDNGQIVETQAVGDKLTFSSDAGRVLQNAVLPAFPVRRRTSEKV.

An ABC transporter domain is found at Leu-4 to Asn-252. Gly-45–Ser-52 contributes to the ATP binding site.

The protein belongs to the ABC transporter superfamily. Nickel importer (TC 3.A.1.5.3) family. The complex is composed of two ATP-binding proteins (NikD and NikE), two transmembrane proteins (NikB and NikC) and a solute-binding protein (NikA).

It is found in the cell inner membrane. The catalysed reaction is Ni(2+)(out) + ATP + H2O = Ni(2+)(in) + ADP + phosphate + H(+). In terms of biological role, part of the ABC transporter complex NikABCDE involved in nickel import. Responsible for energy coupling to the transport system. This chain is Nickel import ATP-binding protein NikE, found in Shigella dysenteriae serotype 1 (strain Sd197).